A 111-amino-acid polypeptide reads, in one-letter code: uncharacterized protein (111 aa).

It belongs to the SUI1 family.

This is an uncharacterized protein from Synechocystis sp. (strain ATCC 27184 / PCC 6803 / Kazusa).